A 245-amino-acid chain; its full sequence is Small ribosomal subunit protein uS2 (245 aa).

It belongs to the universal ribosomal protein uS2 family.

The polypeptide is Small ribosomal subunit protein uS2 (Dehalococcoides mccartyi (strain ATCC BAA-2266 / KCTC 15142 / 195) (Dehalococcoides ethenogenes (strain 195))).